The primary structure comprises 255 residues: Poxin (255 aa).

The protein belongs to the poxin family. Highly divergent.

It catalyses the reaction 2',3'-cGAMP + H2O = Gp(2'-5')Ap(3') + H(+). Functionally, nuclease that cleaves 2',3'-cGAMP. The sequence is that of Poxin from Bombyx mori (Silk moth).